We begin with the raw amino-acid sequence, 417 residues long: Serine hydroxymethyltransferase (417 aa).

(6S)-5,6,7,8-tetrahydrofolate contacts are provided by residues L120 and G124–L126. Position 229 is an N6-(pyridoxal phosphate)lysine (K229).

Belongs to the SHMT family. In terms of assembly, homodimer. Requires pyridoxal 5'-phosphate as cofactor.

The protein resides in the cytoplasm. It carries out the reaction (6R)-5,10-methylene-5,6,7,8-tetrahydrofolate + glycine + H2O = (6S)-5,6,7,8-tetrahydrofolate + L-serine. Its pathway is one-carbon metabolism; tetrahydrofolate interconversion. It participates in amino-acid biosynthesis; glycine biosynthesis; glycine from L-serine: step 1/1. Its function is as follows. Catalyzes the reversible interconversion of serine and glycine with tetrahydrofolate (THF) serving as the one-carbon carrier. This reaction serves as the major source of one-carbon groups required for the biosynthesis of purines, thymidylate, methionine, and other important biomolecules. Also exhibits THF-independent aldolase activity toward beta-hydroxyamino acids, producing glycine and aldehydes, via a retro-aldol mechanism. The polypeptide is Serine hydroxymethyltransferase (Anaeromyxobacter dehalogenans (strain 2CP-C)).